The following is a 281-amino-acid chain: MLKIAVPNKGSLSERAMEILNEAGYAGRGDSKSLNVLDSANDVEFFYLRPKDIAIYVAGGQLDLGITGRDLAADSRADVHEVLSLGFGSSTFRYAAPAGQGWSIEKLEGKRIATSYPNLVRDDLAARGITAEVIRLDGAVEISIKLGVADAIADVVSTGRTLRQQGLEPFGESLCTSEAVIVGRRDEEITPAQRVLLSRIQGILHAQNYLMLDYNVDRDRLDEASAVTPGISGPTVSPLARENWVAVRAMVPLKSANATMDKLASIGAEAILASEIRIARI.

It belongs to the ATP phosphoribosyltransferase family. Long subfamily. Mg(2+) serves as cofactor.

The protein localises to the cytoplasm. The enzyme catalyses 1-(5-phospho-beta-D-ribosyl)-ATP + diphosphate = 5-phospho-alpha-D-ribose 1-diphosphate + ATP. It participates in amino-acid biosynthesis; L-histidine biosynthesis; L-histidine from 5-phospho-alpha-D-ribose 1-diphosphate: step 1/9. Its activity is regulated as follows. Feedback inhibited by histidine. In terms of biological role, catalyzes the condensation of ATP and 5-phosphoribose 1-diphosphate to form N'-(5'-phosphoribosyl)-ATP (PR-ATP). Has a crucial role in the pathway because the rate of histidine biosynthesis seems to be controlled primarily by regulation of HisG enzymatic activity. The chain is ATP phosphoribosyltransferase from Corynebacterium efficiens (strain DSM 44549 / YS-314 / AJ 12310 / JCM 11189 / NBRC 100395).